A 620-amino-acid chain; its full sequence is Probable potassium transport system protein Kup 1 (620 aa).

A run of 12 helical transmembrane segments spans residues 7-27 (GIGLLVSAIGVVFGDIGTSPL), 50-70 (VLSLVFWTVMLLVTVKYVIVI), 102-122 (MMLGVIAAALFYGDSMITPAI), 136-156 (PDLKAYVVPITAVVLTLLFAI), 168-188 (FGPVMCMWFLTLALLGIANIV), 211-231 (LMSFYALGSVVLAVTGGEALY), 246-266 (WFGLVLPALLLNYFGQGALLI), 284-304 (MVVPMVALATLATVIASQAVI), 336-356 (IYVPFTNWTLYFAVMALVVGF), 368-388 (IAVTGTMMIDTILVSFVAALL), 393-413 (PVVVAVVIGTLLLLDFAFFAA), and 415-435 (IIKVAQGGWFPLFIGFISFTV).

This sequence belongs to the HAK/KUP transporter (TC 2.A.72) family.

The protein resides in the cell inner membrane. It catalyses the reaction K(+)(in) + H(+)(in) = K(+)(out) + H(+)(out). Its function is as follows. Transport of potassium into the cell. Likely operates as a K(+):H(+) symporter. The protein is Probable potassium transport system protein Kup 1 of Rhodopseudomonas palustris (strain ATCC BAA-98 / CGA009).